The following is a 140-amino-acid chain: Ribonuclease P protein subunit p20 (140 aa).

It belongs to the histone-like Alba family. Component of nuclear RNase P and RNase MRP complexes. RNase P consists of a catalytic RNA moiety and 10 different protein chains; POP1, POP4, POP5, POP7, RPP14, RPP21, RPP25, RPP30, RPP38 and RPP40. Within the RNase P complex, POP1, POP7 and RPP25 form the 'finger' subcomplex, POP5, RPP14, RPP40 and homodimeric RPP30 form the 'palm' subcomplex, and RPP21, POP4 and RPP38 form the 'wrist' subcomplex. All subunits of the RNase P complex interact with the catalytic RNA. Several subunits of RNase P are also part of the RNase MRP complex. RNase MRP consists of a catalytic RNA moiety and about 8 protein subunits; POP1, POP7, RPP25, RPP30, RPP38, RPP40 and possibly also POP4 and POP5. Interacts with SMN1. POP7 forms a heterodimer with RPP25 that binds to the P3 stem loop of the catalytic RNA.

Its subcellular location is the nucleus. It localises to the nucleolus. It is found in the cytoplasm. The protein resides in the cytoplasmic granule. Functionally, component of ribonuclease P, a ribonucleoprotein complex that generates mature tRNA molecules by cleaving their 5'-ends. Also a component of the MRP ribonuclease complex, which cleaves pre-rRNA sequences. In Mus musculus (Mouse), this protein is Ribonuclease P protein subunit p20 (Pop7).